Consider the following 540-residue polypeptide: Probable feruloyl esterase B-1 (540 aa).

The N-terminal stretch at 1–18 (MLVMQLLLPFLASTAAAA) is a signal peptide. 6 N-linked (GlcNAc...) asparagine glycosylation sites follow: N28, N49, N66, N95, N113, and N195. Intrachain disulfides connect C41/C90 and C76/C129. Disulfide bonds link C202–C458, C271–C288, and C297–C308. The active-site Acyl-ester intermediate is the S203. N234 is a glycosylation site (N-linked (GlcNAc...) asparagine). Ca(2+) contacts are provided by D272, D275, A277, D279, and I281. 3 N-linked (GlcNAc...) asparagine glycosylation sites follow: N298, N328, and N367. Active-site charge relay system residues include D417 and H457. N506 is a glycosylation site (N-linked (GlcNAc...) asparagine). C517 and C539 are disulfide-bonded.

The protein belongs to the tannase family. In terms of assembly, homodimer.

Its subcellular location is the secreted. The enzyme catalyses feruloyl-polysaccharide + H2O = ferulate + polysaccharide.. Functionally, involved in degradation of plant cell walls. Hydrolyzes the feruloyl-arabinose ester bond in arabinoxylans as well as the feruloyl-galactose and feruloyl-arabinose ester bonds in pectin. The polypeptide is Probable feruloyl esterase B-1 (faeB-1) (Aspergillus oryzae (strain ATCC 42149 / RIB 40) (Yellow koji mold)).